The chain runs to 102 residues: uncharacterized protein (102 aa).

This is an uncharacterized protein from Escherichia coli (Bacteriophage T4).